Here is a 223-residue protein sequence, read N- to C-terminus: UPF0441 protein YgiB (223 aa).

A compositionally biased stretch (low complexity) spans T178 to T195. A disordered region spans residues T178–G223. Residues A204–G223 are compositionally biased toward polar residues.

Belongs to the UPF0441 family.

The chain is UPF0441 protein YgiB from Shigella boydii serotype 18 (strain CDC 3083-94 / BS512).